A 512-amino-acid chain; its full sequence is Ribose import ATP-binding protein RbsA 1 (512 aa).

ABC transporter domains are found at residues 8 to 244 (FRME…IGRE) and 254 to 502 (AHRG…LNIA). Position 40–47 (40–47 (GENGAGKS)) interacts with ATP.

Belongs to the ABC transporter superfamily. Ribose importer (TC 3.A.1.2.1) family. In terms of assembly, the complex is composed of an ATP-binding protein (RbsA), two transmembrane proteins (RbsC) and a solute-binding protein (RbsB).

The protein resides in the cell inner membrane. It catalyses the reaction D-ribose(out) + ATP + H2O = D-ribose(in) + ADP + phosphate + H(+). Functionally, part of the ABC transporter complex RbsABC involved in ribose import. Responsible for energy coupling to the transport system. In Rhizobium johnstonii (strain DSM 114642 / LMG 32736 / 3841) (Rhizobium leguminosarum bv. viciae), this protein is Ribose import ATP-binding protein RbsA 1.